The following is a 399-amino-acid chain: MRLTQMPSEFQKALPVLEKIKEAGFEAYFVGGSVRDALLHNPIHDVDIATSSYPEETKQIFPRTADIGIEHGTVLVLDGDEEYEVTTFRTEDVYVDYRRPSAVSFVRSLEEDLKRRDFTVNAFALDETGEIVDLFHGLEDLEKQVLRAVGVASERFNEDALRIMRGFRFQASLGFALEPETFKAMKTLTPLLENISVERTFVEFDKLLLAPFWRRGLASMIESQAYDYLPDMASSQDKLNRLFDLETDFTFESSEQAWAALLWALEIENAQSFLKSWKTSRQFAKQVQDLLIILALRENGELSKRDCYRFDIDLLLQAENLRQAQGKEVNPQAITEKYQSLTIHDKKEIQINGGILIKEYGYQPGPDLGEILTEIEFAIVDGELENNREAIHAYLREKK.

The ATP site is built by G32 and R35. The CTP site is built by G32 and R35. Residues D45 and D47 each contribute to the Mg(2+) site. Positions 116, 159, 162, 165, and 168 each coordinate ATP. CTP is bound by residues R116, D159, R162, R165, and R168.

This sequence belongs to the tRNA nucleotidyltransferase/poly(A) polymerase family. Bacterial CCA-adding enzyme type 3 subfamily. Homodimer. The cofactor is Mg(2+).

The catalysed reaction is a tRNA precursor + 2 CTP + ATP = a tRNA with a 3' CCA end + 3 diphosphate. It carries out the reaction a tRNA with a 3' CCA end + 2 CTP + ATP = a tRNA with a 3' CCACCA end + 3 diphosphate. Catalyzes the addition and repair of the essential 3'-terminal CCA sequence in tRNAs without using a nucleic acid template. Adds these three nucleotides in the order of C, C, and A to the tRNA nucleotide-73, using CTP and ATP as substrates and producing inorganic pyrophosphate. tRNA 3'-terminal CCA addition is required both for tRNA processing and repair. Also involved in tRNA surveillance by mediating tandem CCA addition to generate a CCACCA at the 3' terminus of unstable tRNAs. While stable tRNAs receive only 3'-terminal CCA, unstable tRNAs are marked with CCACCA and rapidly degraded. This Streptococcus pneumoniae serotype 19F (strain G54) protein is CCA-adding enzyme.